We begin with the raw amino-acid sequence, 602 residues long: Raftlin (602 aa).

Residue glycine 2 is the site of N-myristoyl glycine attachment. Cysteine 3 carries the S-palmitoyl cysteine lipid modification. Polar residues predominate over residues 178-195; the sequence is TPASNNSVQSRDNKNVSN. 3 disordered regions span residues 178–282, 451–495, and 524–567; these read TPAS…RCSK, KKES…EVTE, and NETA…QSAP. Composition is skewed to basic and acidic residues over residues 197–209 and 244–265; these read PEDH…EKID and PDCK…REAP. Over residues 468-477 the composition is skewed to basic residues; sequence KPMKKSRKTK.

It belongs to the raftlin family.

The protein localises to the cell membrane. May play a pivotal role in the formation and/or maintenance of lipid rafts. May regulate B-cell antigen receptor-mediated signaling. This Gallus gallus (Chicken) protein is Raftlin (RFTN1).